We begin with the raw amino-acid sequence, 301 residues long: Recombination-associated protein RdgC (301 aa).

This sequence belongs to the RdgC family.

The protein resides in the cytoplasm. It localises to the nucleoid. May be involved in recombination. The polypeptide is Recombination-associated protein RdgC (Xanthomonas oryzae pv. oryzae (strain KACC10331 / KXO85)).